The following is a 1019-amino-acid chain: MDAQIENAIEIAWDPTSDQALKGQAFEFLNQLRTDPQAWQVCIAIFTRTPRTSPVVRLVCLEIVNHAVSSQILDGQGLGFLKQSLLEYVGRVYSGDAQDQVDPAHLQNKLTQTLTYLFVGLYKEGWESFIDDFLALAQKENNLPGVVMYLRILGSIHDEIADLMLSRSDNEARRNNDLKDLIRERDMQKIAQSWQDLLARYSHQNDGVVETTLKTIGKWVSWIDIHLVINQEMISLVLPLVGRTHAAGSGDKVRDAAVDTFTEIVAKKMKPSDKAEMITFLNLREIVSQLLASPPLNEWKGTPRYDTDLAEAVAKLVNTLVADVVRVLEDGKVDNDTRGKAEQLLRDFLPSLLRLFSDEYDEVCSTVIPSLTDLLTFLRKVGQLPPTYSEMLPPILNAIVSKMRYDETSNWGNEDEQTDEAEFQELRKKLQILQKSVASVDENLCIDLLSNLVANMFSTLEQQGSQMDWRDLDLALHEIYLFGELALPNTGLAQKSQPNPLAAERLAVMMSKMVESGIANYHHPAILLQYMEICTRYYSFFEDQQRYIPQVLENFVRLVHHDHVRIRTRSWYLFHRFVKTLRAQVGNVAKTVIESISDLLPIKAEVPGNDADDDMSSDESDHSADAVFSSQLFLYEAIGCISSTSATPPADQGLYARSVMEPLFSDMSVHIERAKAGDPQAVLQVHHIIMALGTLANGFADAHAAQQGKRPQPHEAVSNEFSRAAEAILIALNELNAIGDVRAACRSAFSRLLGVLGAAVLPQLPQWIEGLLSRSSSNDEMAMFLRLLEQVVYNFKSEIYNILDVLLTPLLQRVFSGLSDPINGTDDEIQLQELRREFVSFVQVILHNELGGVLVSASNQGTFESLISSIIDIAKTLTHGNLVASRVAFNVLSRMASQWGGPDVATIGENPMTTGAPAPAIPGFDQFMIEHFHGLCWTVLQDGGFRPNTDAQSRQILNEIAGIQQVIYSKTGDAFVNHLQGVTFPQLGIDGTEYLRLLTTSREKKPVVTWLLGLLKGRR.

Belongs to the exportin family.

The protein localises to the nucleus. The protein resides in the cytoplasm. Its function is as follows. tRNA nucleus export receptor which facilitates tRNA translocation across the nuclear pore complex. Involved in pre-tRNA splicing, probably by affecting the interaction of pre-tRNA with splicing endonuclease. This is Exportin-T (LOS1) from Chaetomium globosum (strain ATCC 6205 / CBS 148.51 / DSM 1962 / NBRC 6347 / NRRL 1970) (Soil fungus).